Here is a 134-residue protein sequence, read N- to C-terminus: Phosphoribosyl-AMP cyclohydrolase (134 aa).

Residue Asp78 coordinates Mg(2+). Cys79 serves as a coordination point for Zn(2+). 2 residues coordinate Mg(2+): Asp80 and Asp82. Positions 96 and 103 each coordinate Zn(2+).

This sequence belongs to the PRA-CH family. Homodimer. Mg(2+) is required as a cofactor. The cofactor is Zn(2+).

Its subcellular location is the cytoplasm. The catalysed reaction is 1-(5-phospho-beta-D-ribosyl)-5'-AMP + H2O = 1-(5-phospho-beta-D-ribosyl)-5-[(5-phospho-beta-D-ribosylamino)methylideneamino]imidazole-4-carboxamide. The protein operates within amino-acid biosynthesis; L-histidine biosynthesis; L-histidine from 5-phospho-alpha-D-ribose 1-diphosphate: step 3/9. In terms of biological role, catalyzes the hydrolysis of the adenine ring of phosphoribosyl-AMP. The polypeptide is Phosphoribosyl-AMP cyclohydrolase (Cupriavidus taiwanensis (strain DSM 17343 / BCRC 17206 / CCUG 44338 / CIP 107171 / LMG 19424 / R1) (Ralstonia taiwanensis (strain LMG 19424))).